The chain runs to 331 residues: Major outer membrane protein P.IB (331 aa).

The N-terminal stretch at 1–19 (MKKSLIALTLAALPVAAMA) is a signal peptide.

The protein belongs to the Gram-negative porin family. In terms of assembly, homotrimer.

The protein localises to the cell outer membrane. Functionally, serves as a slightly cation selective porin. In Neisseria meningitidis serogroup B, this protein is Major outer membrane protein P.IB (porB).